A 542-amino-acid chain; its full sequence is Homeobox protein ceh-18 (542 aa).

Polar residues predominate over residues 243–252 (NTPTQPTASL). Positions 243 to 264 (NTPTQPTASLTPKKAENRPPVV) are disordered. One can recognise a POU-specific domain in the interval 290–364 (DDRIDMNELE…LLKEWLADVE (75 aa)). The homeobox DNA-binding region spans 421–480 (RRRKRTNLDMNQRNALDTFFALNPRPDHDKMTDIANSLELDRDVVRVWFCNRRQKMRRVD). The interval 514–542 (LASCQASNDDSDGTSGSPDAPSNDGCSDL) is disordered. Residues 517-530 (CQASNDDSDGTSGS) are compositionally biased toward polar residues.

It belongs to the POU transcription factor family. Interacts with akir-1. Expressed in the gonadal sheath cells that signal the oocyte, but not in the oocyte.

The protein localises to the nucleus. Directs gonadal sheath cell differentiation and function. Also directs gonad migration and plays a role in specifying the differentiated phenotypes of epidermal cells during postembryonic development. Plays a role in oogenesis, regulating a sheath cell signal that causes oocytes to maintain diakinesis arrest during meiosis. Negatively regulates oocyte maturation, ovulation and MAPK activation in oocytes when sperm are not available for fertilization. May be recruited by akir-1 to the promoter regions of antimicrobial peptide genes to control gene expression in response to fungal infection. This is Homeobox protein ceh-18 from Caenorhabditis elegans.